The sequence spans 199 residues: Putative 3-methyladenine DNA glycosylase (199 aa).

Belongs to the DNA glycosylase MPG family.

The chain is Putative 3-methyladenine DNA glycosylase from Chlorobium phaeobacteroides (strain BS1).